Here is a 149-residue protein sequence, read N- to C-terminus: MADQLTEEQIAEFKEAFSLFDKDGDGSITTQELGTVMRSLGQNPTEAELQGMVNEIDKDGNGTVDFPEFLTMMSRKMKDTDSEEEIREAFRVFDKDGNGFVSAAELRHVMTKLGEKLSDEEVDEMIQAADTDGDGQVNYEEFVHMLVSK.

4 consecutive EF-hand domains span residues 8-43 (EQIA…LGQN), 44-79 (PTEA…KMKD), 81-116 (DSEE…LGEK), and 117-149 (LSDE…LVSK). Residues D21, D23, D25, S27, E32, D57, D59, N61, T63, E68, D94, D96, N98, E105, D130, D132, D134, Q136, and E141 each coordinate Ca(2+).

Belongs to the calmodulin family. As to quaternary structure, interacts with MYO10, the interaction is calcium-dependent and essential for MYO10 function in filopodial extension.

Its function is as follows. May function as a specific light chain of unconventional myosin-10 (MYO10), also enhances MYO10 translation, possibly by acting as a chaperone for the emerging MYO10 heavy chain protein. May compete with calmodulin by binding, with different affinities, to cellular substrates. The polypeptide is Calmodulin-like protein 3 (Calml3) (Mus musculus (Mouse)).